A 93-amino-acid polypeptide reads, in one-letter code: Small ribosomal subunit protein uS19 (93 aa).

It belongs to the universal ribosomal protein uS19 family.

Protein S19 forms a complex with S13 that binds strongly to the 16S ribosomal RNA. The chain is Small ribosomal subunit protein uS19 from Ehrlichia canis (strain Jake).